The sequence spans 247 residues: UPF0309 protein LMOf2365_2617 (247 aa).

The SIS domain maps to 31–214 (VAESIENDGV…ETMVNDNFTP (184 aa)).

It belongs to the UPF0309 family.

The chain is UPF0309 protein LMOf2365_2617 from Listeria monocytogenes serotype 4b (strain F2365).